The chain runs to 444 residues: uncharacterized protein (444 aa).

At lysine 268 the chain carries N6-(pyridoxal phosphate)lysine.

The protein belongs to the class-III pyridoxal-phosphate-dependent aminotransferase family. Requires pyridoxal 5'-phosphate as cofactor.

This is an uncharacterized protein from Bacillus subtilis (strain 168).